The chain runs to 344 residues: tRNA N6-adenosine threonylcarbamoyltransferase (344 aa).

Residues H112 and H116 each coordinate Fe cation. Substrate contacts are provided by residues L134 to G138, D167, G180, and N280. D308 serves as a coordination point for Fe cation.

Belongs to the KAE1 / TsaD family. It depends on Fe(2+) as a cofactor.

Its subcellular location is the cytoplasm. It carries out the reaction L-threonylcarbamoyladenylate + adenosine(37) in tRNA = N(6)-L-threonylcarbamoyladenosine(37) in tRNA + AMP + H(+). Required for the formation of a threonylcarbamoyl group on adenosine at position 37 (t(6)A37) in tRNAs that read codons beginning with adenine. Is involved in the transfer of the threonylcarbamoyl moiety of threonylcarbamoyl-AMP (TC-AMP) to the N6 group of A37, together with TsaE and TsaB. TsaD likely plays a direct catalytic role in this reaction. The sequence is that of tRNA N6-adenosine threonylcarbamoyltransferase from Rickettsia conorii (strain ATCC VR-613 / Malish 7).